The primary structure comprises 874 residues: MAAVDSDVESLPRGGFRCCLCHVTTANRPSLDAHLGGRKHRHLVELRAARKAQGLRSVFVSGFPRDVDSAQLSEYFLAFGPVASVVMDKDKGVFAIVEMGDVGAREAVLSQSQHSLGGHRLRVRPREQKEFQSPASKSPKGAAPDSHQLAKALAEAADVGAQMIKLVGLRELSEAERQLRSLVVALMQEVFTEFFPGCVVHPFGSSINSFDVHGCDLDLFLDLGDLEEPQPVPKAPESPSLDSALASPLDPQALACTPASPPDSQPPASPQDSEALDFETPSSSLAPQTPDSALASETLASPQSLPPASPLLEDREEGDLGKASELAETPKEEKAEGAAMLELVGSILRGCVPGVYRVQTVPSARRPVVKFCHRPSGLHGDVSLSNRLALHNSRFLSLCSELDGRVRPLVYTLRCWAQGRGLSGSGPLLSNYALTLLVIYFLQTRDPPVLPTVSQLTQKAGEGEQVEVDGWDCSFPRDASRLEPSINVEPLSSLLAQFFSCVSCWDLRGSLLSLREGQALPVAGGLPSNLWEGLRLGPLNLQDPFDLSHNVAANVTSRVAGRLQNCCRAAANYCRSLQYQRRSSRGRDWGLLPLLQPSSPSSLLSATPIPLPLAPFTQLTAALVQVFREALGCHIEQATKRTRSEGGGTGESSQGGTSKRLKVDGQKNCCEEGKEEQQGCAGDGGEDRVEEMVIEVGEMVQDWAMQSPGQPGDLPLTTGKHGAPGEEGQPSHAALAERGPKGHEAAQEWSQGEAGKGASLPSSASWRCALWHRVWQGRRRARRRLQQQTKEGAGGGAGTRAGWLATEAQVTQELKGLSGGEERPETEPLLSFVASVSPADRMLTVTPLQDPQGLFPDLHHFLQVFLPQAIRHLK.

Residues 16 to 46 form a Matrin-type zinc finger; the sequence is FRCCLCHVTTANRPSLDAHLGGRKHRHLVEL. An RRM domain is found at 56–128; the sequence is RSVFVSGFPR…HRLRVRPREQ (73 aa). Residues 113 to 146 form a disordered region; sequence QHSLGGHRLRVRPREQKEFQSPASKSPKGAAPDS. ATP is bound at residue S205. Mg(2+) contacts are provided by D216 and D218. The UTP site is built by D216 and D218. Residues 252-334 form a disordered region; sequence QALACTPASP…ELAETPKEEK (83 aa). Residues 259–269 are compositionally biased toward pro residues; it reads ASPPDSQPPAS. The span at 280 to 291 shows a compositional bias: polar residues; sequence TPSSSLAPQTPD. Position 392 (N392) interacts with ATP. UTP is bound by residues N392, R414, Y432, and H549. The PAP-associated domain maps to 491-549; that stretch reads LSSLLAQFFSCVSCWDLRGSLLSLREGQALPVAGGLPSNLWEGLRLGPLNLQDPFDLSH. Residues 598–874 form a KA1; binds the bulging loops of U6 snRNA but is dispensable for terminal uridylyltransferase activity region; the sequence is SSPSSLLSAT…FLPQAIRHLK (277 aa). 2 disordered regions span residues 638 to 662 and 705 to 761; these read ATKR…KRLK and MQSP…ASLP. S750 carries the post-translational modification Phosphoserine.

It belongs to the DNA polymerase type-B-like family. As to quaternary structure, associates with the cleavage and polyadenylation specificity factor (CPSF) complex. Interacts with CPSF1 and CPSF3; the interaction is direct. Interacts with PIP5K1A. It depends on Mg(2+) as a cofactor. Mn(2+) serves as cofactor. In terms of processing, phosphorylated by CK1 in the proline-rich (Pro-rich) region. Widely expressed.

It localises to the nucleus. Its subcellular location is the nucleolus. The protein resides in the nucleus speckle. The catalysed reaction is RNA(n) + UTP = RNA(n)-3'-uridine ribonucleotide + diphosphate. It carries out the reaction RNA(n) + ATP = RNA(n)-3'-adenine ribonucleotide + diphosphate. Adenylyltransferase activity is specifically phosphatidylinositol 4,5-bisphosphate (PtdIns(4,5)P2). Functionally, poly(A) polymerase that creates the 3'-poly(A) tail of specific pre-mRNAs. Localizes to nuclear speckles together with PIP5K1A and mediates polyadenylation of a select set of mRNAs, such as HMOX1. In addition to polyadenylation, it is also required for the 3'-end cleavage of pre-mRNAs: binds to the 3'UTR of targeted pre-mRNAs and promotes the recruitment and assembly of the CPSF complex on the 3'UTR of pre-mRNAs. In addition to adenylyltransferase activity, also has uridylyltransferase activity. However, the ATP ratio is higher than UTP in cells, suggesting that it functions primarily as a poly(A) polymerase. Acts as a specific terminal uridylyltransferase for U6 snRNA in vitro: responsible for a controlled elongation reaction that results in the restoration of the four 3'-terminal UMP-residues found in newly transcribed U6 snRNA. Not involved in replication-dependent histone mRNA degradation. In Homo sapiens (Human), this protein is Speckle targeted PIP5K1A-regulated poly(A) polymerase (TUT1).